The following is a 970-amino-acid chain: MTTADSNSSATRGSHEMADGSNRVPNDEPYHRKSPESCENANFFVRAMRASFGYRKTSLTILVFLSVIATVLLSYYDSSLEFSVSLPTDKSESKILDHSWDVLQEIARDEHTYASEANDRVHDYLEDIIGFLVDKKSYMEYDNDLNNTHSFLRQTAPSTVTYYESNNLIVRINGSDPELPALLLSAHYDSVPSSFGVTDDGMGIASLIGILNYFSAKQTSQPARTIIINFNNNEEFGLYGALAFLSHPWFKQIKYFLNLEGTGAGGKAILFRGTDYGFAKYFKNVRFPYASSLFQQAFSARLVHSETDYKYYAELGHLRGLDLAFFRPRDMYHTAKDNIANVNKKSLWHMLSSTIDFTNGVVGGEIDLDVEAKQKEAAAFTSIFNYFFVVPMTFVFGVNVLLMVLVPLVSLISLALIFAHRKWSVSLVTFFKFPLSFILSIFLLDNFSSWFVVSVNNFLPNSSAGIIALTYFSFFVLANYLLLNGINLLFWKFKGTRHDEKLVVILQISFMFWVSLIWSTANIAKSQFNGEHSGEFLLTLLYILQAAGGVFGLLCWLFKRSRTVHTNNQELEPLLEHAVEEGYGAHVEQEGHISSSASSAISVNVIESPPPTKHYSYDWSIQFLFIVPISSFLSYNYGWLILEGLKKTLQESATSEYLVFRALKLLAVVVAVPYLPFIFKVNRIVFLVTIFLFVYGLGAIVISEPFTEANPLKLRFLQTIDLDNSPKSNLVSASGRANSSIAEILRDLPSVKESETEVVCNAKADGMTICNYEGLNPHLAPGTKNAQDLLSVKVLSNSSSSINYPFGMLSGKFEIRAEKNRECRLSFREDTGGKRSSGVVKTVVVYKNDLKNSNKVNAMKAPEGFSQDDYGNFVYKNMTGISDLKLNKLDWNRPYRIGVEWVASLDDSDTQPTLKVSVDCYWAEIGQIAEKGKIVDRIPAYTELLHYSPNYVTWANLDQGLVNVKKSVLV.

A compositionally biased stretch (polar residues) spans 1–12; the sequence is MTTADSNSSATR. The disordered stretch occupies residues 1–35; sequence MTTADSNSSATRGSHEMADGSNRVPNDEPYHRKSP. Residues 1-56 lie on the Cytoplasmic side of the membrane; the sequence is MTTADSNSSATRGSHEMADGSNRVPNDEPYHRKSPESCENANFFVRAMRASFGYRK. Residues 25–35 are compositionally biased toward basic and acidic residues; it reads PNDEPYHRKSP. The chain crosses the membrane as a helical span at residues 57 to 77; it reads TSLTILVFLSVIATVLLSYYD. Residues 78–397 lie on the Vacuolar side of the membrane; the sequence is SSLEFSVSLP…FVVPMTFVFG (320 aa). 2 N-linked (GlcNAc...) asparagine glycosylation sites follow: Asn-146 and Asn-173. 2 residues coordinate Zn(2+): His-187 and Asp-199. Residue Glu-234 is the Proton acceptor of the active site. Residues Glu-235, Glu-260, and His-333 each contribute to the Zn(2+) site. Residues 398–418 traverse the membrane as a helical segment; the sequence is VNVLLMVLVPLVSLISLALIF. Residues 419 to 423 are Cytoplasmic-facing; that stretch reads AHRKW. The helical transmembrane segment at 424 to 444 threads the bilayer; that stretch reads SVSLVTFFKFPLSFILSIFLL. The Vacuolar portion of the chain corresponds to 445–465; sequence DNFSSWFVVSVNNFLPNSSAG. Residues Asn-446 and Asn-461 are each glycosylated (N-linked (GlcNAc...) asparagine). The chain crosses the membrane as a helical span at residues 466–486; it reads IIALTYFSFFVLANYLLLNGI. Over 487–502 the chain is Cytoplasmic; the sequence is NLLFWKFKGTRHDEKL. The chain crosses the membrane as a helical span at residues 503-523; it reads VVILQISFMFWVSLIWSTANI. The Vacuolar segment spans residues 524-535; sequence AKSQFNGEHSGE. A helical transmembrane segment spans residues 536 to 556; sequence FLLTLLYILQAAGGVFGLLCW. Over 557–620 the chain is Cytoplasmic; that stretch reads LFKRSRTVHT…PTKHYSYDWS (64 aa). Residues 621-641 traverse the membrane as a helical segment; it reads IQFLFIVPISSFLSYNYGWLI. Topologically, residues 642–658 are vacuolar; that stretch reads LEGLKKTLQESATSEYL. The helical transmembrane segment at 659–679 threads the bilayer; sequence VFRALKLLAVVVAVPYLPFIF. Over 680–683 the chain is Cytoplasmic; the sequence is KVNR. The helical transmembrane segment at 684–704 threads the bilayer; it reads IVFLVTIFLFVYGLGAIVISE. Residues 705 to 970 lie on the Vacuolar side of the membrane; sequence PFTEANPLKL…LVNVKKSVLV (266 aa). N-linked (GlcNAc...) asparagine glycans are attached at residues Asn-738, Asn-797, and Asn-877.

It belongs to the peptidase M28 family. The cofactor is Zn(2+).

The protein localises to the vacuole membrane. May be involved in vacuolar sorting and osmoregulation. The chain is Vacuolar membrane protease from Meyerozyma guilliermondii (strain ATCC 6260 / CBS 566 / DSM 6381 / JCM 1539 / NBRC 10279 / NRRL Y-324) (Yeast).